We begin with the raw amino-acid sequence, 474 residues long: E3 ubiquitin-protein ligase RNF14 (474 aa).

In terms of domain architecture, RWD spans 11 to 137 (DELLALASIY…QFLKEETLAY (127 aa)). The D-box signature appears at 37 to 45 (RIYLDLPQN). The interval 216–457 (KLFLCSICFC…DPGSPCFNRL (242 aa)) is TRIAD supradomain. Residues C220, C223, C238, H240, C243, C246, C265, C270, C309, C314, C329, C332, C337, C340, and H345 each contribute to the Zn(2+) site. The segment at 220-270 (CSICFCEKLGSECMYFLECRHVYCKACLKDYFEIQIRDGQVQCLNCPEPKC) adopts an RING-type 1 zinc-finger fold. An IBR-type zinc finger spans residues 289–350 (ARYDRLLLQS…RLTYHGVSPC (62 aa)). A Phosphoserine modification is found at S348. Residue C350 participates in Zn(2+) binding. A coiled-coil region spans residues 351–395 (KVTAEKLMDLRNEYLQADEANKRLLDQRYGKRVIQKALEEMESKE). The segment at 361-474 (RNEYLQADEA…DDIWEDEVED (114 aa)) is interaction with androgen receptor. Residues C404 and C407 each coordinate Zn(2+). The RING-type 2; atypical zinc finger occupies 404 to 433 (CPCCGTPIEKLDGCNKMTCTGCMQYFCWIC). C417 is a catalytic residue. 6 residues coordinate Zn(2+): C422, C425, C430, C433, H445, and C453.

This sequence belongs to the RBR family. RNF14 subfamily. In terms of assembly, interacts with GCN1; interaction takes place in response to ribosome collisions and is required for ubiquitination of EEF1A1/eEF1A. Interacts with the ubiquitin-conjugating enzymes UBE2E1 and UBE2E2. Interacts with AR/androgen receptor. Interacts with TCF7/TCF1, TCF7L1/TCF3 and TCF7L2/TCF4; promoting Wnt signaling. RING-type zinc finger-dependent and UBE2E2-dependent autoubiquitination. As to expression, widely expressed.

It is found in the cytoplasm. It localises to the nucleus. The catalysed reaction is [E2 ubiquitin-conjugating enzyme]-S-ubiquitinyl-L-cysteine + [acceptor protein]-L-lysine = [E2 ubiquitin-conjugating enzyme]-L-cysteine + [acceptor protein]-N(6)-ubiquitinyl-L-lysine.. It participates in protein modification; protein ubiquitination. Functionally, E3 ubiquitin-protein ligase that plays a key role in the RNF14-RNF25 translation quality control pathway, a pathway that takes place when a ribosome has stalled during translation, and which promotes ubiquitination and degradation of translation factors on stalled ribosomes. Recruited to stalled ribosomes by the ribosome collision sensor GCN1 and mediates 'Lys-6'-linked ubiquitination of target proteins, leading to their degradation. Mediates ubiquitination of EEF1A1/eEF1A and ETF1/eRF1 translation factors on stalled ribosomes, leading to their degradation. Also catalyzes ubiquitination of ribosomal proteins RPL0, RPL1, RPL12, RPS13 and RPS17. Specifically required to resolve RNA-protein cross-links caused by reactive aldehydes, which trigger translation stress by stalling ribosomes: acts by catalying 'Lys-6'-linked ubiquitination of RNA-protein cross-links, leading to their removal by the ATP-dependent unfoldase VCP and subsequent degradation by the proteasome. Independently of its function in the response to stalled ribosomes, acts as a regulator of transcription in Wnt signaling via its interaction with TCF transcription factors (TCF7/TCF1, TCF7L1/TCF3 and TCF7L2/TCF4). May also play a role as a coactivator for androgen- and, to a lesser extent, progesterone-dependent transcription. This is E3 ubiquitin-protein ligase RNF14 from Homo sapiens (Human).